We begin with the raw amino-acid sequence, 158 residues long: C-type lectin lectoxin-Thr1 (158 aa).

A signal peptide spans 1-23; the sequence is MGRFIFATLGLLLVAFSINGAKG. 3 disulfide bridges follow: C26-C37, C54-C154, and C129-C146. The 123-residue stretch at 33–155 folds into the C-type lectin domain; it reads LKGFCYKVFN…CASTRAYLCK (123 aa). The Mannose-binding motif lies at 119-121; sequence EPN. 3 residues coordinate Ca(2+): E127, N142, and D143.

The protein belongs to the true venom lectin family. As to expression, expressed by the venom gland.

It is found in the secreted. Its function is as follows. Mannose-binding lectin which recognizes specific carbohydrate structures and agglutinates a variety of animal cells by binding to cell-surface glycoproteins and glycolipids. May be a calcium-dependent lectin. This chain is C-type lectin lectoxin-Thr1, found in Thrasops jacksonii (Jackson's black tree snake).